Here is an 80-residue protein sequence, read N- to C-terminus: Acyl carrier protein (80 aa).

Residues 4–79 (NSIEEKVRSI…DVVAYIEKVQ (76 aa)) form the Carrier domain. S39 carries the post-translational modification O-(pantetheine 4'-phosphoryl)serine.

This sequence belongs to the acyl carrier protein (ACP) family. In terms of processing, 4'-phosphopantetheine is transferred from CoA to a specific serine of apo-ACP by AcpS. This modification is essential for activity because fatty acids are bound in thioester linkage to the sulfhydryl of the prosthetic group.

The protein localises to the cytoplasm. The protein operates within lipid metabolism; fatty acid biosynthesis. Carrier of the growing fatty acid chain in fatty acid biosynthesis. The chain is Acyl carrier protein from Akkermansia muciniphila (strain ATCC BAA-835 / DSM 22959 / JCM 33894 / BCRC 81048 / CCUG 64013 / CIP 107961 / Muc).